The following is a 57-amino-acid chain: uncharacterized protein (57 aa).

Residues 34-54 (AALLDAAALVVIPGLLTAAAV) traverse the membrane as a helical segment.

The protein localises to the membrane. This is an uncharacterized protein from Dictyostelium discoideum (Social amoeba).